The chain runs to 290 residues: Serpentine receptor class U-26 (290 aa).

Helical transmembrane passes span 31 to 51, 70 to 90, 112 to 134, 158 to 178, 185 to 205, 213 to 233, and 262 to 282; these read LPMLFLLVPILYIPITIIIIL, LLSAISISQCMCLLFFLADFL, FITILTIFTYHINYSTMIFPFLV, FSIPFICVYPIIFTFFMFPAI, AYPFPFGAIIFRIERTFFGLV, NTLFWMTCCIITNFILLLLLI, and MIFSYLSNAMIVFLLLELHIV.

This sequence belongs to the nematode receptor-like protein sru family.

It localises to the membrane. The polypeptide is Serpentine receptor class U-26 (sru-26) (Caenorhabditis elegans).